A 706-amino-acid chain; its full sequence is Elongation factor G 1 (706 aa).

The region spanning 8 to 290 (NRYRNIGICA…AVIDYLPAPT (283 aa)) is the tr-type G domain. Residues 17–24 (AHVDAGKT), 88–92 (DTPGH), and 142–145 (NKMD) each bind GTP.

This sequence belongs to the TRAFAC class translation factor GTPase superfamily. Classic translation factor GTPase family. EF-G/EF-2 subfamily.

The protein resides in the cytoplasm. In terms of biological role, catalyzes the GTP-dependent ribosomal translocation step during translation elongation. During this step, the ribosome changes from the pre-translocational (PRE) to the post-translocational (POST) state as the newly formed A-site-bound peptidyl-tRNA and P-site-bound deacylated tRNA move to the P and E sites, respectively. Catalyzes the coordinated movement of the two tRNA molecules, the mRNA and conformational changes in the ribosome. This chain is Elongation factor G 1, found in Pseudomonas aeruginosa (strain ATCC 15692 / DSM 22644 / CIP 104116 / JCM 14847 / LMG 12228 / 1C / PRS 101 / PAO1).